The chain runs to 1631 residues: Ras GTPase-activating-like protein IQGAP3 (1631 aa).

A Calponin-homology (CH) domain is found at 34–149 (LCRLEEAKRW…YCIHALSLFL (116 aa)). Tyr-162 is modified (phosphotyrosine). Ser-539 is subject to Phosphoserine. 4 IQ domains span residues 730–759 (NVGFVIQLQARLRGFLVRQKFAEHSHFLRT), 760–789 (WLPAVIKIQAHWRGYRQRKIYLEWLQYFKA), 790–819 (NLDAIIKIQAWARMWAARRQYLRRLHYFQK), and 820–849 (NVNSIVKIQAFFRARKAQDDYRILVHAPHP). The region spanning 1004–1253 (YLLLQLFKTA…LKFRKFIHRA (250 aa)) is the Ras-GAP domain. Position 1424 is a phosphoserine (Ser-1424).

The protein is Ras GTPase-activating-like protein IQGAP3 (IQGAP3) of Homo sapiens (Human).